We begin with the raw amino-acid sequence, 492 residues long: High-affinity nickel transport protein (492 aa).

Over 1–24 (MLSRWTRRVNESRLAQRKLTLLGR) the chain is Cytoplasmic. The chain crosses the membrane as a helical span at residues 25–45 (AIALVVGELLFNAVCWIAAGI). Residues 46-50 (CFGKT) lie on the Extracellular side of the membrane. A helical transmembrane segment spans residues 51–71 (DGILGLALLAWTIGLRHGLDA). Topologically, residues 72–94 (DHISAIDNATRQLVSQGQLPITC) are cytoplasmic. The helical transmembrane segment at 95–115 (GLFFSLGHSTIVIVVNVAIAV) threads the bilayer. Over 116-136 (SVDIYDKLDRVGSIGGIVGAA) the chain is Extracellular. A helical transmembrane segment spans residues 137–157 (VSASFLFLIACLNIYFLVGAI). The Cytoplasmic segment spans residues 158–210 (KQRRSMKRRQALGLPPDEDEGDPSKIYGGGCMVRVVGPILRAVDRPWKMYPVG). The helical transmembrane segment at 211–231 (VLFGFGFDTASSIALLAISAI) threads the bilayer. The Extracellular segment spans residues 232–239 (AQRGPNGD). Residues 240–260 (AISHGKIVILPFLFTAGMSLV) form a helical membrane-spanning segment. The Cytoplasmic portion of the chain corresponds to 261 to 382 (DSLDSILMLY…AKANTMSSLS (122 aa)). Residues 383-403 (IILTLLSILVALSISLIEIMG) form a helical membrane-spanning segment. Topologically, residues 404-439 (LIGDNCTQCQDAANDPDGGGLAGSWWRAWARANDQS) are extracellular. N408 carries N-linked (GlcNAc...) asparagine glycosylation. Residues 440–460 (GYIGAAIVGCFAAILAGWYGA) traverse the membrane as a helical segment. At 461–492 (KWGKKKWKARRDANAAIVLEDNEDDAAETPVA) the chain is on the cytoplasmic side.

Belongs to the NiCoT transporter (TC 2.A.52) family.

Its subcellular location is the cell membrane. Its function is as follows. High-affinity nickel-specific transporter responsible for nickel uptake and required for high levels of activity of urease URE1. Does not transport cobalt. Plays a role in host brain invasion. The sequence is that of High-affinity nickel transport protein from Cryptococcus neoformans var. grubii serotype A (strain H99 / ATCC 208821 / CBS 10515 / FGSC 9487) (Filobasidiella neoformans var. grubii).